Consider the following 653-residue polypeptide: Biotin biosynthesis bifunctional protein BioWF (653 aa).

Residue R278 coordinates substrate. 365–366 lines the pyridoxal 5'-phosphate pocket; the sequence is GY. H390 is a substrate binding site. Residues S436, 461–464, and 492–495 each bind pyridoxal 5'-phosphate; these read DDAH and TASK. K495 is subject to N6-(pyridoxal phosphate)lysine.

The protein in the N-terminal section; belongs to the BioW family. This sequence in the C-terminal section; belongs to the class-II pyridoxal-phosphate-dependent aminotransferase family. BioF subfamily. Homodimer. Mg(2+) serves as cofactor. Requires pyridoxal 5'-phosphate as cofactor.

It catalyses the reaction heptanedioate + ATP + CoA = 6-carboxyhexanoyl-CoA + AMP + diphosphate. The catalysed reaction is 6-carboxyhexanoyl-[ACP] + L-alanine + H(+) = (8S)-8-amino-7-oxononanoate + holo-[ACP] + CO2. The protein operates within metabolic intermediate metabolism; pimeloyl-CoA biosynthesis; pimeloyl-CoA from pimelate: step 1/1. Its pathway is cofactor biosynthesis; biotin biosynthesis. Catalyzes both the decarboxylative condensation of pimeloyl-[acyl-carrier protein] and L-alanine to produce 8-amino-7-oxononanoate (AON), [acyl-carrier protein], and carbon dioxide, and the transformation of pimelate into pimeloyl-CoA with concomitant hydrolysis of ATP to AMP. The chain is Biotin biosynthesis bifunctional protein BioWF from Cutibacterium acnes (strain DSM 16379 / KPA171202) (Propionibacterium acnes).